The sequence spans 675 residues: Protein PALS1 (675 aa).

Disordered stretches follow at residues 1–32 (MTTS…HPKH) and 52–79 (RSAQ…KQEL). The required for the correct localization of PALS1 and PATJ at cell-cell contacts and the normal formation of tight junctions and adherens junctions stretch occupies residues 1 to 345 (MTTSYMNGHV…QQIKPPPAKE (345 aa)). 2 positions are modified to phosphoserine: Ser-14 and Ser-25. Positions 21–140 (LGLASPEEHP…LKHIQHTLVD (120 aa)) are interaction with PARD6B. Basic and acidic residues predominate over residues 54–79 (AQLERIRQQQEDMRRRREEEGKKQEL). Phosphoserine occurs at positions 83 and 84. L27 domains are found at residues 120–177 (KILE…NKAS) and 179–235 (PFPL…MQLE). The interval 181-243 (PLIANVQDLV…LEPITDERVY (63 aa)) is interaction with LIN7C. Residues 256-336 (IVRIEKARDI…TLTFVLIPSQ (81 aa)) form the PDZ domain. An SH3 domain is found at 345-417 (ETVIHVKAHF…PGKSFQQQRE (73 aa)). Positions 479 to 660 (KRPIILIGPQ…AYQELLRLIN (182 aa)) constitute a Guanylate kinase-like domain. An ATP-binding site is contributed by 486-493 (GPQNCGQN).

This sequence belongs to the MAGUK family. As to quaternary structure, heterodimer with MPP1. Forms a heterotrimeric complex composed of PALS1, LIN7B and PATJ; the N-terminal L27 domain of PALS1 interacts with the L27 domain of PATJ and the C-terminal L27 domain of PALS1 interacts with the L27 domain of LIN7B. Component of a complex composed of PALS1, CRB1 and MPP4. Component of a complex whose core is composed of ARHGAP17, AMOT, PALS1, PATJ and PARD3/PAR3. Component of a complex composed of PALS1, CRB1 and EPB41L5. Within the complex, interacts (via HOOK domain) with EPB41L5 (via FERM domain), and interacts with CRB1 (via intracellular domain). Component of a complex composed of PALS1, MPP3 and CRB1; PALS1 acts as a bridging protein between MPP3 (via guanylate kinase-like domain) and CRB1. Component of a complex composed of CRB3, PALS1 and PATJ. As part of the Crumbs complex; interacts with WWP1, the interaction is enhanced by AMOTL2 and facilitates WWP1 localization to the plasma membrane. The Crumbs complex promotes monoubiquitination of AMOTL2 by WWP1, which activates the Hippo signaling pathway. Interacts (via PDZ domain) with PATJ (via N-terminus). Interacts with EZR. Interacts (via PDZ domain) with CRB1 (via C-terminal ERLI motif). While the PDZ domain is sufficient for interaction with CRB1, the adjacent SH3 and guanylate kinase-like domains are likely to contribute to a high affinity interaction. Interacts with WWTR1/TAZ (via WW domain). Interacts with MPP7. Interacts (via PDZ domain) with CRB3 (via C-terminus). Interacts with LIN7C. Interacts with MPDZ. Interacts with PARD6B. Interacts with SC6A1. Interacts with CDH5; the interaction promotes PALS1 localization to cell junctions and is required for CDH5-mediated vascular lumen formation and endothelial cell. Interacts with NPHP1 (via coiled coil and SH3 domains). Interacts with NPHP4. Interacts with CRB2.

The protein localises to the golgi apparatus. It localises to the cell membrane. Its subcellular location is the endomembrane system. It is found in the cell junction. The protein resides in the tight junction. The protein localises to the adherens junction. It localises to the cell projection. Its subcellular location is the axon. It is found in the perikaryon. The protein resides in the apical cell membrane. In terms of biological role, plays a role in tight junction biogenesis and in the establishment of cell polarity in epithelial cells. Also involved in adherens junction biogenesis by ensuring correct localization of the exocyst complex protein EXOC4/SEC8 which allows trafficking of adherens junction structural component CDH1 to the cell surface. Plays a role through its interaction with CDH5 in vascular lumen formation and endothelial membrane polarity. Required during embryonic and postnatal retinal development. Required for the maintenance of cerebellar progenitor cells in an undifferentiated proliferative state, preventing premature differentiation, and is required for cerebellar histogenesis, fissure formation, cerebellar layer organization and cortical development. Plays a role in neuronal progenitor cell survival, potentially via promotion of mTOR signaling. Plays a role in the radial and longitudinal extension of the myelin sheath in Schwann cells. May modulate SC6A1/GAT1-mediated GABA uptake by stabilizing the transporter. May play a role in the T-cell receptor-mediated activation of NF-kappa-B. Required for localization of EZR to the apical membrane of parietal cells and may play a role in the dynamic remodeling of the apical cytoskeleton. Required for the normal polarized localization of the vesicular marker STX4. Required for the correct trafficking of the myelin proteins PMP22 and MAG. Involved in promoting phosphorylation and cytoplasmic retention of transcriptional coactivators YAP1 and WWTR1/TAZ which leads to suppression of TGFB1-dependent transcription of target genes such as CCN2/CTGF, SERPINE1/PAI1, SNAI1/SNAIL1 and SMAD7. The protein is Protein PALS1 of Rattus norvegicus (Rat).